A 148-amino-acid polypeptide reads, in one-letter code: UPF0756 membrane protein CKO_01811 (148 aa).

4 consecutive transmembrane segments (helical) span residues 14–34 (ALGF…LIIV), 51–71 (LTVG…SGSL), 86–106 (LVAI…VTLM), and 121–141 (VLGV…AGLV).

It belongs to the UPF0756 family.

The protein resides in the cell membrane. This chain is UPF0756 membrane protein CKO_01811, found in Citrobacter koseri (strain ATCC BAA-895 / CDC 4225-83 / SGSC4696).